Reading from the N-terminus, the 360-residue chain is MDKYEVVKDLGAGNFGVARLLRHKETKELVAMKYIERGRKIDENVAREIINHRSLRHPNIIRFKEVILTPTHLAIVMEYASGGELFERICNAGRFSEAEARYFFQQLICGVDYCHSLQICHRDLKLENTLLDGSPAPLLKICDFGYSKSSLLHSRPKSTVGTPAYIAPEVLSRREYDGKHADVWSCGVTLYVMLVGGYPFEDPDDPRNFRKTIQRIMAVQYKIPDYVHISQECRHLLSRIFVTNSAKRITLKEIKKHPWYLKNLPKELTEPAQAAYYKRETPSFSLQSVEDIMKIVGEARNPAPSSNAVKGFDDDEEDVEDEVEEEEEEEEEEEEEEEEEEDEYEKHVKEAHSCQEPPKA.

Positions 4-260 constitute a Protein kinase domain; that stretch reads YEVVKDLGAG…LKEIKKHPWY (257 aa). ATP is bound by residues 10–18 and lysine 33; that span reads LGAGNFGVA. The Proton acceptor role is filled by aspartate 123. Residues 298 to 360 are disordered; that stretch reads EARNPAPSSN…AHSCQEPPKA (63 aa). Acidic residues predominate over residues 313 to 343; that stretch reads DDDEEDVEDEVEEEEEEEEEEEEEEEEEEDE. Residues 344–360 show a composition bias toward basic and acidic residues; that stretch reads YEKHVKEAHSCQEPPKA.

This sequence belongs to the protein kinase superfamily. Ser/Thr protein kinase family. Expressed in seedlings.

The catalysed reaction is L-seryl-[protein] + ATP = O-phospho-L-seryl-[protein] + ADP + H(+). The enzyme catalyses L-threonyl-[protein] + ATP = O-phospho-L-threonyl-[protein] + ADP + H(+). This is Serine/threonine-protein kinase SRK2H (SRK2H) from Arabidopsis thaliana (Mouse-ear cress).